The primary structure comprises 180 residues: Adenine phosphoribosyltransferase (180 aa).

Belongs to the purine/pyrimidine phosphoribosyltransferase family. As to quaternary structure, homodimer.

It is found in the cytoplasm. It carries out the reaction AMP + diphosphate = 5-phospho-alpha-D-ribose 1-diphosphate + adenine. Its pathway is purine metabolism; AMP biosynthesis via salvage pathway; AMP from adenine: step 1/1. Its function is as follows. Catalyzes a salvage reaction resulting in the formation of AMP, that is energically less costly than de novo synthesis. This chain is Adenine phosphoribosyltransferase, found in Pasteurella multocida (strain Pm70).